The chain runs to 316 residues: Methionyl-tRNA formyltransferase (316 aa).

Residue 111–114 (GLLP) participates in (6S)-5,6,7,8-tetrahydrofolate binding.

It belongs to the Fmt family.

The catalysed reaction is L-methionyl-tRNA(fMet) + (6R)-10-formyltetrahydrofolate = N-formyl-L-methionyl-tRNA(fMet) + (6S)-5,6,7,8-tetrahydrofolate + H(+). Its function is as follows. Attaches a formyl group to the free amino group of methionyl-tRNA(fMet). The formyl group appears to play a dual role in the initiator identity of N-formylmethionyl-tRNA by promoting its recognition by IF2 and preventing the misappropriation of this tRNA by the elongation apparatus. The chain is Methionyl-tRNA formyltransferase from Chlamydia trachomatis serovar L2b (strain UCH-1/proctitis).